A 753-amino-acid chain; its full sequence is MTILNHTLGFPRVGLRRELKKAQESYWAGNSTREELLAVGRELRARHWDQQKQAGIDLLPVGDFAWYDHVLTTSLLLGNVPPRHQNKDGSVDIDTLFRIGRGRAPTGEPAAAAEMTKWFNTNYHYMVPEFVKGQQFKLTWTQLLEEVDEALALGHKVKPVLLGPITYLWLGKVKGEQFDRLSLLNDILPVYQQVLAELAKRGIEWVQIDEPALVLELPQAWLDAYKPAYDALQGQVKLLLTTYFEGVTPNLDTITALPVQGLHVDLVHGKDDVAELHKRLPSDWLLSAGLINGRNVWRADLTEKYAQIKDIVGKRDLWVASSCSLLHSPIDLSVETRLDAEVKSWFAFALQKCHELALLRDALNSGDTAALAEWSAPIQARRHSTRVHNPAVEKRLAAITAQDSQRANVYEVRAEAQRARFKLPAWPTTTIGSFPQTTEIRTLRLDFKKGNLDANNYRTGIAEHIKQAIVEQERLGLDVLVHGEAERNDMVEYFGEHLDGFVFTQNGWVQSYGSRCVKPPIVIGDVSRPAPITVEWAKYAQSLTDKPVKGMLTGPVTILCWSFPREDVSRETIAKQIALALRDEVADLEAAGIGIIQIDEPALREGLPLRRSDWDAYLQWGVEAFRINAAVAKDDTQIHTHMCYCEFNDIMDSIAALDADVITIETSRSDMELLESFEEFDYPNEIGPGVYDIHSPNVPSVEWIEALLKKAAKRIPAERLWVNPDCGLKTRGWPETRAALANMVQAAQNLRRG.

Residues 17-20 and K117 each bind 5-methyltetrahydropteroyltri-L-glutamate; that span reads RELK. Residues 431–433 and E484 each bind L-homocysteine; that span reads IGS. L-methionine is bound by residues 431–433 and E484; that span reads IGS. 5-methyltetrahydropteroyltri-L-glutamate is bound by residues 515-516 and W561; that span reads RC. D599 lines the L-homocysteine pocket. D599 lines the L-methionine pocket. Residue E605 participates in 5-methyltetrahydropteroyltri-L-glutamate binding. H641, C643, and E665 together coordinate Zn(2+). Residue H694 is the Proton donor of the active site. C726 provides a ligand contact to Zn(2+).

Belongs to the vitamin-B12 independent methionine synthase family. Zn(2+) serves as cofactor.

The enzyme catalyses 5-methyltetrahydropteroyltri-L-glutamate + L-homocysteine = tetrahydropteroyltri-L-glutamate + L-methionine. It participates in amino-acid biosynthesis; L-methionine biosynthesis via de novo pathway; L-methionine from L-homocysteine (MetE route): step 1/1. Catalyzes the transfer of a methyl group from 5-methyltetrahydrofolate to homocysteine resulting in methionine formation. This chain is 5-methyltetrahydropteroyltriglutamate--homocysteine methyltransferase, found in Escherichia coli O6:H1 (strain CFT073 / ATCC 700928 / UPEC).